The primary structure comprises 66 residues: MPLPKIQDIQDFTDKEIEEKIIKLKKEIFDLKLKQATRQNVRSHLFKHKKHQLAQLLTIKKDSNYV.

This sequence belongs to the universal ribosomal protein uL29 family.

The protein localises to the plastid. The protein resides in the chloroplast. This Gracilaria tenuistipitata var. liui (Red alga) protein is Large ribosomal subunit protein uL29c.